The chain runs to 104 residues: Iron-sulfur cluster assembly protein CyaY (104 aa).

Belongs to the frataxin family.

Involved in iron-sulfur (Fe-S) cluster assembly. May act as a regulator of Fe-S biogenesis. This chain is Iron-sulfur cluster assembly protein CyaY, found in Aliivibrio fischeri (strain ATCC 700601 / ES114) (Vibrio fischeri).